The following is a 208-amino-acid chain: Large ribosomal subunit protein bL25 (208 aa).

The interval 1-21 (MSNEFSLNAEKRDVQGKGASR) is disordered.

The protein belongs to the bacterial ribosomal protein bL25 family. CTC subfamily. In terms of assembly, part of the 50S ribosomal subunit; part of the 5S rRNA/L5/L18/L25 subcomplex. Contacts the 5S rRNA. Binds to the 5S rRNA independently of L5 and L18.

This is one of the proteins that binds to the 5S RNA in the ribosome where it forms part of the central protuberance. The sequence is that of Large ribosomal subunit protein bL25 from Hahella chejuensis (strain KCTC 2396).